The following is a 914-amino-acid chain: Caprin-2 (914 aa).

7 disordered regions span residues 259-283 (PLPK…PSGL), 298-326 (EFLN…KEDF), 367-411 (KTVD…LPKD), 439-480 (DGES…SSQR), 495-529 (CLSN…PPLY), 608-631 (HRSF…PELN), and 718-747 (GAGT…AYPL). The segment covering 264–273 (DSQEKTETIK) has biased composition (basic and acidic residues). Positions 274–283 (PDSQSRPSGL) are enriched in polar residues. Residues 370 to 392 (DIVKRSTTDPKEKRQRKKAEQDS) are compositionally biased toward basic and acidic residues. Positions 469 to 480 (KSPSDILPSSQR) are enriched in polar residues. Residues 508-520 (LELHSEDKPRKQA) show a composition bias toward basic and acidic residues. Residues 610 to 626 (SFTSAKTSSVTTASTQT) show a composition bias toward low complexity. Residues 718 to 738 (GAGTATQRSSAGWSDSSQVSS) are compositionally biased toward polar residues. One can recognise a C1q domain in the interval 780 to 914 (LTQLRVAFSA…TFSGFLLYQD (135 aa)). Ca(2+) is bound by residues Asp-865 and Glu-871.

Belongs to the caprin family. In terms of assembly, homotrimer; via C1q domain.

It localises to the cytoplasm. It is found in the cell membrane. In terms of biological role, promotes phosphorylation of the Wnt coreceptor LRP6, leading to increased activity of the canonical Wnt signaling pathway. Facilitates constitutive LRP6 phosphorylation by CDK14/CCNY during G2/M stage of the cell cycle, which may potentiate cells for Wnt signaling. May regulate the transport and translation of mRNAs, modulating for instance the expression of proteins involved in synaptic plasticity in neurons. Involved in regulation of growth as erythroblasts shift from a highly proliferative state towards their terminal phase of differentiation. May be involved in apoptosis. This chain is Caprin-2, found in Danio rerio (Zebrafish).